The following is a 225-amino-acid chain: Sugar fermentation stimulation protein homolog (225 aa).

It belongs to the SfsA family.

In Sulfurisphaera tokodaii (strain DSM 16993 / JCM 10545 / NBRC 100140 / 7) (Sulfolobus tokodaii), this protein is Sugar fermentation stimulation protein homolog.